We begin with the raw amino-acid sequence, 228 residues long: Ribose-5-phosphate isomerase A (228 aa).

Residues 32 to 35, 85 to 88, and 98 to 101 contribute to the substrate site; these read TGST, DGAD, and KGGG. The Proton acceptor role is filled by Glu107. Lys125 contacts substrate.

This sequence belongs to the ribose 5-phosphate isomerase family. In terms of assembly, homodimer.

The enzyme catalyses aldehydo-D-ribose 5-phosphate = D-ribulose 5-phosphate. The protein operates within carbohydrate degradation; pentose phosphate pathway; D-ribose 5-phosphate from D-ribulose 5-phosphate (non-oxidative stage): step 1/1. Catalyzes the reversible conversion of ribose-5-phosphate to ribulose 5-phosphate. The chain is Ribose-5-phosphate isomerase A from Cupriavidus taiwanensis (strain DSM 17343 / BCRC 17206 / CCUG 44338 / CIP 107171 / LMG 19424 / R1) (Ralstonia taiwanensis (strain LMG 19424)).